The primary structure comprises 313 residues: WD repeat-containing protein 82-A (313 aa).

WD repeat units follow at residues 19-58, 105-144, 146-184, 192-231, 236-276, and 280-313; these read ENSD…PKRT, GHSK…CQGL, HLQG…KGPF, DRTC…VMHT, NNSK…KVAV, and KHTG…TIDD.

The protein belongs to the WD repeat SWD2 family. Component of the SET1/COMPASS complex. Component of the PNUTS-PP1 phosphatase complex.

It localises to the nucleus. The protein localises to the chromosome. Its subcellular location is the cytoplasm. In terms of biological role, regulatory component of the SET1/COMPASS complex implicated in the tethering of this complex to transcriptional start sites of active genes. Facilitates histone H3 'Lys-4' methylation (H3K4me) via recruitment of the SETD1A or SETD1B to the 'Ser-5' phosphorylated C-terminal domain (CTD) of RNA polymerase II large subunit (POLR2A). Component of the PNUTS-PP1 protein phosphatase complex, a protein phosphatase 1 (PP1) complex that promotes RNA polymerase II transcription pause-release, allowing transcription elongation. This is WD repeat-containing protein 82-A (wdr82-a) from Xenopus laevis (African clawed frog).